Here is a 269-residue protein sequence, read N- to C-terminus: tRNA pseudouridine synthase A (269 aa).

The active-site Nucleophile is aspartate 51. Tyrosine 109 contributes to the substrate binding site.

This sequence belongs to the tRNA pseudouridine synthase TruA family. As to quaternary structure, homodimer.

The catalysed reaction is uridine(38/39/40) in tRNA = pseudouridine(38/39/40) in tRNA. Functionally, formation of pseudouridine at positions 38, 39 and 40 in the anticodon stem and loop of transfer RNAs. In Haemophilus influenzae (strain 86-028NP), this protein is tRNA pseudouridine synthase A.